We begin with the raw amino-acid sequence, 85 residues long: Small ribosomal subunit protein bS18 (85 aa).

It belongs to the bacterial ribosomal protein bS18 family. In terms of assembly, part of the 30S ribosomal subunit. Forms a tight heterodimer with protein bS6.

Binds as a heterodimer with protein bS6 to the central domain of the 16S rRNA, where it helps stabilize the platform of the 30S subunit. The polypeptide is Small ribosomal subunit protein bS18 (Helicobacter pylori (strain P12)).